Here is a 189-residue protein sequence, read N- to C-terminus: Cytidylate kinase (189 aa).

7–15 (GPPGSGKTS) contacts ATP.

It belongs to the cytidylate kinase family. Type 2 subfamily.

The protein resides in the cytoplasm. It carries out the reaction CMP + ATP = CDP + ADP. It catalyses the reaction dCMP + ATP = dCDP + ADP. The polypeptide is Cytidylate kinase (Saccharolobus islandicus (strain L.S.2.15 / Lassen #1) (Sulfolobus islandicus)).